Here is a 304-residue protein sequence, read N- to C-terminus: tRNA pseudouridine synthase B (304 aa).

Residue aspartate 38 is the Nucleophile of the active site.

It belongs to the pseudouridine synthase TruB family. Type 1 subfamily.

It carries out the reaction uridine(55) in tRNA = pseudouridine(55) in tRNA. Its function is as follows. Responsible for synthesis of pseudouridine from uracil-55 in the psi GC loop of transfer RNAs. The sequence is that of tRNA pseudouridine synthase B from Listeria monocytogenes serovar 1/2a (strain ATCC BAA-679 / EGD-e).